The chain runs to 28 residues: Cyclotide vodo I3 (28 aa).

3 cysteine pairs are disulfide-bonded: Cys4/Cys18, Cys8/Cys20, and Cys13/Cys25.

In terms of processing, this is a cyclic peptide. Contains 3 disulfide bonds.

In terms of biological role, probably participates in a plant defense mechanism. The polypeptide is Cyclotide vodo I3 (Viola odorata (Sweet violet)).